The sequence spans 159 residues: Lipoprotein signal peptidase (159 aa).

3 helical membrane-spanning segments follow: residues 4 to 24 (PYFV…DQVT), 64 to 84 (MSFF…FYIK), and 88 to 108 (GNFL…GNFI). Active-site residues include Asp118 and Asp136. A helical membrane pass occupies residues 131 to 151 (IFNGADSSLTIGVILVLIALL).

This sequence belongs to the peptidase A8 family.

The protein localises to the cell membrane. The catalysed reaction is Release of signal peptides from bacterial membrane prolipoproteins. Hydrolyzes -Xaa-Yaa-Zaa-|-(S,diacylglyceryl)Cys-, in which Xaa is hydrophobic (preferably Leu), and Yaa (Ala or Ser) and Zaa (Gly or Ala) have small, neutral side chains.. Its pathway is protein modification; lipoprotein biosynthesis (signal peptide cleavage). In terms of biological role, this protein specifically catalyzes the removal of signal peptides from prolipoproteins. The polypeptide is Lipoprotein signal peptidase (Staphylococcus carnosus (strain TM300)).